A 136-amino-acid polypeptide reads, in one-letter code: Histone H2B (136 aa).

Residues 1 to 10 (MPPKAADKKP) are compositionally biased toward basic and acidic residues. The tract at residues 1 to 44 (MPPKAADKKPAAKAPVASKAPEKKDAGKKTASTGEKKKRTKARR) is disordered. N6-acetyllysine; alternate is present on residues Lys8 and Lys9. Residues Lys8 and Lys9 each participate in a glycyl lysine isopeptide (Lys-Gly) (interchain with G-Cter in SUMO); alternate cross-link. Lys13 carries the post-translational modification N6-acetyllysine. Lys23 carries the post-translational modification N6-acetyllysine; alternate. Lys23 participates in a covalent cross-link: Glycyl lysine isopeptide (Lys-Gly) (interchain with G-Cter in SUMO); alternate. Lys24 is covalently cross-linked (Glycyl lysine isopeptide (Lys-Gly) (interchain with G-Cter in SUMO)). A Glycyl lysine isopeptide (Lys-Gly) (interchain with G-Cter in ubiquitin) cross-link involves residue Lys130.

Belongs to the histone H2B family. The nucleosome is a histone octamer containing two molecules each of H2A, H2B, H3 and H4 assembled in one H3-H4 heterotetramer and two H2A-H2B heterodimers. The octamer wraps approximately 147 bp of DNA. Post-translationally, monoubiquitinated to form H2BK123ub1. H2BK123ub1 gives a specific tag for epigenetic transcriptional activation and is also prerequisite for H3K4me and H3K79me formation. H2BK123ub1 also modulates the formation of double-strand breaks during meiosis and is a prerequisite for DNA-damage checkpoint activation. In terms of processing, acetylated by GCN5 to form H2BK11ac and H2BK16ac. H2BK16ac can also be formed by ESA1. Acetylation of N-terminal lysines and particularly formation of H2BK11acK16ac has a positive effect on transcription. Sumoylation to form H2BK6su or H2BK7su, and probably also H2BK16su or H2BK17su, occurs preferentially near the telomeres and represses gene transcription.

The protein localises to the nucleus. The protein resides in the chromosome. Functionally, core component of nucleosome. Nucleosomes wrap and compact DNA into chromatin, limiting DNA accessibility to the cellular machineries which require DNA as a template. Histones thereby play a central role in transcription regulation, DNA repair, DNA replication and chromosomal stability. DNA accessibility is regulated via a complex set of post-translational modifications of histones, also called histone code, and nucleosome remodeling. The chain is Histone H2B (hh2b) from Rosellinia necatrix (White root-rot fungus).